The primary structure comprises 579 residues: YTH domain-containing family protein 2 (579 aa).

Residues 1 to 45 (MSASSLLEQRPKGQGNKVQNGSVHQKDGLNDDDFEPYLSPQARPN) are disordered. Serine 2 carries the N-acetylserine modification. Serine 2, serine 4, serine 5, serine 22, serine 39, and serine 196 each carry phosphoserine. Residues 2-384 (SASSLLEQRP…QAGSGSTPSE (383 aa)) are localization to mRNA processing bodies (P-bodies). The segment at 247–387 (AKQQPKLKTK…SGSTPSEPHP (141 aa)) is disordered. Positions 291-316 (ALVQNIGQPTQGSPQPVGQQANNSPP) are enriched in polar residues. Over residues 337-349 (AQLSVQQQAAQPT) the composition is skewed to low complexity. Position 359 is a phosphoserine (serine 359). A compositionally biased stretch (gly residues) spans 359-371 (SGFGHNGVDGNGV). Residues 372–383 (GQSQAGSGSTPS) are compositionally biased toward polar residues. Residues 385 to 579 (PHPVLEKLRS…VKKERQGRGK (195 aa)) are interaction with m6A-containing mRNAs. Serine 394 bears the Phosphoserine mark. The 135-residue stretch at 410–544 (GRVFIIKSYS…EKAKQVLKII (135 aa)) folds into the YTH domain. RNA contacts are provided by residues 416–418 (KSY), aspartate 422, 432–433 (WC), asparagine 462, tryptophan 486, and tryptophan 491.

It belongs to the YTHDF family. YTHDF2 subfamily. In terms of assembly, interacts with CNOT1; interaction is direct and promotes recruitment of the CCR4-NOT complex. Interacts with YTHDF3. Interacts with RIDA/HRSP12; interaction leads to recruitment of the ribonuclease P/MRP complex. Post-translationally, ubiquitinated by the SCF(SKP2) complex, leading to its degradation. Widely expressed, with highest expression in testis.

It localises to the cytoplasm. It is found in the cytosol. The protein localises to the P-body. Its subcellular location is the stress granule. The protein resides in the nucleus. Its function is as follows. Specifically recognizes and binds N6-methyladenosine (m6A)-containing RNAs, and regulates their stability. M6A is a modification present at internal sites of mRNAs and some non-coding RNAs and plays a role in mRNA stability and processing. Acts as a regulator of mRNA stability by promoting degradation of m6A-containing mRNAs via interaction with the CCR4-NOT and ribonuclease P/MRP complexes, depending on the context. The YTHDF paralogs (YTHDF1, YTHDF2 and YTHDF3) share m6A-containing mRNAs targets and act redundantly to mediate mRNA degradation and cellular differentiation. M6A-containing mRNAs containing a binding site for RIDA/HRSP12 (5'-GGUUC-3') are preferentially degraded by endoribonucleolytic cleavage: cooperative binding of RIDA/HRSP12 and YTHDF2 to transcripts leads to recruitment of the ribonuclease P/MRP complex. Other m6A-containing mRNAs undergo deadenylation via direct interaction between YTHDF2 and CNOT1, leading to recruitment of the CCR4-NOT and subsequent deadenylation of m6A-containing mRNAs. Required maternally to regulate oocyte maturation: probably acts by binding to m6A-containing mRNAs, thereby regulating maternal transcript dosage during oocyte maturation, which is essential for the competence of oocytes to sustain early zygotic development. Also required during spermatogenesis: regulates spermagonial adhesion by promoting degradation of m6A-containing transcripts coding for matrix metallopeptidases. Also involved in hematopoietic stem cells specification by binding to m6A-containing mRNAs, leading to promote their degradation. Also acts as a regulator of neural development by promoting m6A-dependent degradation of neural development-related mRNA targets. Inhibits neural specification of induced pluripotent stem cells by binding to methylated neural-specific mRNAs and promoting their degradation, thereby restraining neural differentiation. Regulates circadian regulation of hepatic lipid metabolism: acts by promoting m6A-dependent degradation of PPARA transcripts. Regulates the innate immune response to infection by inhibiting the type I interferon response: acts by binding to m6A-containing IFNB transcripts and promoting their degradation. May also act as a promoter of cap-independent mRNA translation following heat shock stress: upon stress, relocalizes to the nucleus and specifically binds mRNAs with some m6A methylation mark at their 5'-UTR, protecting demethylation of mRNAs by FTO, thereby promoting cap-independent mRNA translation. Regulates mitotic entry by promoting the phase-specific m6A-dependent degradation of WEE1 transcripts. Promotes formation of phase-separated membraneless compartments, such as P-bodies or stress granules, by undergoing liquid-liquid phase separation upon binding to mRNAs containing multiple m6A-modified residues: polymethylated mRNAs act as a multivalent scaffold for the binding of YTHDF proteins, juxtaposing their disordered regions and thereby leading to phase separation. The resulting mRNA-YTHDF complexes then partition into different endogenous phase-separated membraneless compartments, such as P-bodies, stress granules or neuronal RNA granules. May also recognize and bind RNAs modified by C5-methylcytosine (m5C) and act as a regulator of rRNA processing. This is YTH domain-containing family protein 2 from Mus musculus (Mouse).